Consider the following 164-residue polypeptide: Transcription elongation factor GreA (164 aa).

Belongs to the GreA/GreB family.

Functionally, necessary for efficient RNA polymerase transcription elongation past template-encoded arresting sites. The arresting sites in DNA have the property of trapping a certain fraction of elongating RNA polymerases that pass through, resulting in locked ternary complexes. Cleavage of the nascent transcript by cleavage factors such as GreA or GreB allows the resumption of elongation from the new 3'terminus. GreA releases sequences of 2 to 3 nucleotides. In Helicobacter pylori (strain J99 / ATCC 700824) (Campylobacter pylori J99), this protein is Transcription elongation factor GreA.